We begin with the raw amino-acid sequence, 219 residues long: Casein kinase II subunit beta' (219 aa).

Thr2 bears the Phosphothreonine; by autocatalysis mark.

This sequence belongs to the casein kinase 2 subunit beta family. In terms of assembly, tetramer of two alpha and two beta' subunits. Post-translationally, phosphorylated by alpha subunit.

Participates in Wnt signaling. Plays a complex role in regulating the basal catalytic activity of the alpha subunit. The chain is Casein kinase II subunit beta' (CkIIbeta2) from Drosophila melanogaster (Fruit fly).